The following is a 962-amino-acid chain: Glycine dehydrogenase (decarboxylating) (962 aa).

K709 carries the post-translational modification N6-(pyridoxal phosphate)lysine.

This sequence belongs to the GcvP family. In terms of assembly, the glycine cleavage system is composed of four proteins: P, T, L and H. Requires pyridoxal 5'-phosphate as cofactor.

It carries out the reaction N(6)-[(R)-lipoyl]-L-lysyl-[glycine-cleavage complex H protein] + glycine + H(+) = N(6)-[(R)-S(8)-aminomethyldihydrolipoyl]-L-lysyl-[glycine-cleavage complex H protein] + CO2. In terms of biological role, the glycine cleavage system catalyzes the degradation of glycine. The P protein binds the alpha-amino group of glycine through its pyridoxal phosphate cofactor; CO(2) is released and the remaining methylamine moiety is then transferred to the lipoamide cofactor of the H protein. The chain is Glycine dehydrogenase (decarboxylating) from Shewanella baltica (strain OS155 / ATCC BAA-1091).